Reading from the N-terminus, the 443-residue chain is Serine/threonine-protein kinase Nek2 (443 aa).

In terms of domain architecture, Protein kinase spans 8-271 (YEVLHSIGTG…VEEILESPLI (264 aa)). ATP contacts are provided by residues 14 to 22 (IGTGSYGRC) and lysine 37. The Proton acceptor role is filled by aspartate 141. Phosphothreonine; by autocatalysis is present on threonine 170. Serine 171 is subject to Phosphoserine; by autocatalysis. Phosphothreonine; by autocatalysis is present on residues threonine 175 and threonine 179. Serine 184 is modified (phosphoserine). Position 241 is a phosphoserine; by autocatalysis (serine 241). The interval 264–443 (EILESPLIAD…LKSRQILGMR (180 aa)) is interaction with PCNT. Residues 282–292 (NLERRGRRSGE) show a composition bias toward basic and acidic residues. The segment at 282–303 (NLERRGRRSGEPSKLPDSSPVL) is disordered. Serine 300 is modified (phosphoserine). Residues 301-443 (PVLSELKLKE…LKSRQILGMR (143 aa)) form an interaction with CEP85 region. Residues 303 to 361 (LSELKLKERQLQDREQALRAREDILEQKERELCIRERLAEDKLARAESLMKNYSLLKEH) are a coiled coil. The leucine-zipper stretch occupies residues 306–334 (LKLKERQLQDREQALRAREDILEQKEREL). A necessary for interaction with MAD1L1 region spans residues 329 to 443 (QKERELCIRE…LKSRQILGMR (115 aa)). A required for microtubule binding and for localization to the centrosomes region spans residues 333 to 370 (ELCIRERLAEDKLARAESLMKNYSLLKEHRLLCLAGGP). Position 356 is a phosphoserine; by STK3/MST2 (serine 356). The tract at residues 383–402 (VHFHGESKENTARSENSESY) is disordered. Basic and acidic residues predominate over residues 385–398 (FHGESKENTARSEN). Serine 389, serine 396, and serine 401 each carry phosphoserine. Positions 402–437 (YLAKSKCRDLKKRLHAAQLRAQALADIEKNYQLKSR) are interaction with SAV1 and STK3/MST2. Positions 403–427 (LAKSKCRDLKKRLHAAQLRAQALAD) form a coiled coil. Serine 436 bears the Phosphoserine; by STK3/MST2 mark.

This sequence belongs to the protein kinase superfamily. NEK Ser/Thr protein kinase family. NIMA subfamily. As to quaternary structure, forms homodimers and heterodimers. Interacts with CDC20, CTNB1, MAD1L1, MAD2L1, MAPK, NEK11, NPM1, NDC80, PCNT, PPP1CA, PPP1CC and SGO1. Interacts with STK3/MST2 (via SARAH domain) and SAV1 (via SARAH domain). Interacts with NECAB3 and HMGA2. Interacts with CEP68; the interaction leads to phosphorylation of CEP68. Interacts with CNTLN; the interaction leads to phosphorylation of CNTLN. Interacts with CEP85. Requires Mg(2+) as cofactor. Post-translationally, activated by autophosphorylation. Protein phosphatase 1 represses autophosphorylation and activation of isoform 1 by dephosphorylation. Phosphorylation by STK3/MST2 is necessary for its localization to the centrosome. In terms of tissue distribution, most abundantly expressed in testis. Low levels found in mid-gestation embryo, ovary, placenta, intestine, thymus and skin. Within the testis, expression restricted to germ cells with highest levels detected in spermatocytes at pachytene and diplotene stages. Also expressed in meiotic pachytene oocytes.

The protein localises to the nucleus. It is found in the nucleolus. Its subcellular location is the cytoplasm. The protein resides in the cytoskeleton. It localises to the microtubule organizing center. The protein localises to the centrosome. It is found in the spindle pole. Its subcellular location is the chromosome. The protein resides in the centromere. It localises to the kinetochore. It catalyses the reaction L-seryl-[protein] + ATP = O-phospho-L-seryl-[protein] + ADP + H(+). It carries out the reaction L-threonyl-[protein] + ATP = O-phospho-L-threonyl-[protein] + ADP + H(+). Its activity is regulated as follows. Its catalytic activity is inhibited by the inhibitor CCT241950. In the presence of this inhibitor, displays an autoinhibited conformation: Tyr-70 side chain points into the active site, interacts with the activation loop, and blocks the alphaC helix. Protein kinase which is involved in the control of centrosome separation and bipolar spindle formation in mitotic cells and chromatin condensation in meiotic cells. Regulates centrosome separation (essential for the formation of bipolar spindles and high-fidelity chromosome separation) by phosphorylating centrosomal proteins such as CROCC, CEP250 and NINL, resulting in their displacement from the centrosomes. Regulates kinetochore microtubule attachment stability in mitosis via phosphorylation of NDC80. Involved in regulation of mitotic checkpoint protein complex via phosphorylation of CDC20 and MAD2L1. Plays an active role in chromatin condensation during the first meiotic division through phosphorylation of HMGA2. Phosphorylates: PPP1CC; SGO1; NECAB3 and NPM1. Essential for localization of MAD2L1 to kinetochore and MAPK1 and NPM1 to the centrosome. Phosphorylates CEP68 and CNTLN directly or indirectly. NEK2-mediated phosphorylation of CEP68 promotes CEP68 dissociation from the centrosome and its degradation at the onset of mitosis. Phosphorylates and activates NEK11 in G1/S-arrested cells. Involved in the regulation of centrosome disjunction. This Mus musculus (Mouse) protein is Serine/threonine-protein kinase Nek2 (Nek2).